The chain runs to 981 residues: Anoctamin-3 (981 aa).

Residues 1-22 (MVHHSGSIQSFKQQKGMNISKS) show a composition bias toward polar residues. A disordered region spans residues 1-33 (MVHHSGSIQSFKQQKGMNISKSEITKETSLKPS). Residues 1–403 (MVHHSGSIQS…LYFAWLGWYT (403 aa)) lie on the Cytoplasmic side of the membrane. A helical membrane pass occupies residues 404–424 (GMLIPAAIVGLCVFFYGLFTM). Residues N425, N448, and N455 are each glycosylated (N-linked (GlcNAc...) asparagine). Residues 425 to 469 (NNSQVSQEICKATEVFMCPLCDKNCSLQRLNDSCIYAKVTYLFDN) lie on the Extracellular side of the membrane. Residues 470 to 490 (GGTVFFAIFMAIWATVFLEFW) traverse the membrane as a helical segment. At 491–550 (KRRRSILTYTWDLIEWEEEEETLRPQFEAKYYKMEIVNPITGKPEPHQPSSDKVTRLLVS) the chain is on the cytoplasmic side. Residues 551-571 (VSGIFFMISLVITAVFGVVVY) traverse the membrane as a helical segment. Residues 572 to 592 (RLVVMEQFASFKWNFIKQYWQ) lie on the Extracellular side of the membrane. A helical transmembrane segment spans residues 593–613 (FATSAAAVCINFIIIMLLNLA). At 614–640 (YEKIAYLLTNLEYPRTESEWENSFALK) the chain is on the cytoplasmic side. The helical transmembrane segment at 641-661 (MFLFQFVNLNSSIFYIAFFLG) threads the bilayer. Topologically, residues 662 to 761 (RFVGHPGKYN…MDEYLEMVLQ (100 aa)) are extracellular. Residues 762–782 (FGFTTIFVAAFPLAPLLALLN) traverse the membrane as a helical segment. Residues 783–810 (NIIEIRLDAYKFVTQWRRPLPARATDIG) are Cytoplasmic-facing. A helical membrane pass occupies residues 811 to 831 (IWLGILEGIGILAVITNAFVI). Over 832 to 914 (AITSDYIPRF…QYWHILAARL (83 aa)) the chain is Extracellular. N866 carries an N-linked (GlcNAc...) asparagine glycan. The helical transmembrane segment at 915-935 (AFIIVFEHLVFGIKSFIAYLI) threads the bilayer. At 936 to 981 (PDVPKGLHDRIRREKYLVQEMMYEAELEHLQQQRRKSGQPVHHEWP) the chain is on the cytoplasmic side.

This sequence belongs to the anoctamin family. In terms of assembly, interacts with KCNT1/Slack. Highly expressed in the forebrain striatum.

It is found in the cell membrane. The catalysed reaction is a 1,2-diacyl-sn-glycero-3-phosphocholine(in) = a 1,2-diacyl-sn-glycero-3-phosphocholine(out). It carries out the reaction a beta-D-galactosyl-(1&lt;-&gt;1')-N-acylsphing-4-enine(out) = a beta-D-galactosyl-(1&lt;-&gt;1')-N-acylsphing-4-enine(in). Its function is as follows. Has calcium-dependent phospholipid scramblase activity; scrambles phosphatidylcholine and galactosylceramide. Seems to act as potassium channel regulator and may inhibit pain signaling; can facilitate KCNT1/Slack channel activity by promoting its full single-channel conductance at very low sodium concentrations and by increasing its sodium sensitivity. Does not exhibit calcium-activated chloride channel (CaCC) activity. The protein is Anoctamin-3 (ANO3) of Homo sapiens (Human).